The primary structure comprises 365 residues: c-di-GMP synthase (365 aa).

This sequence belongs to the CD-NTase family. E subfamily.

It catalyses the reaction 2 GTP = 3',3'-c-di-GMP + 2 diphosphate. Its function is as follows. Cyclic nucleotide synthase (second messenger synthase) of a CBASS antivirus system. CBASS (cyclic oligonucleotide-based antiphage signaling system) provides immunity against bacteriophage. The CD-NTase protein synthesizes cyclic nucleotides in response to infection; these serve as specific second messenger signals. The signals activate a diverse range of effectors, leading to bacterial cell death and thus abortive phage infection. A type I-D(GG) CBASS system. Functionally, cyclic dinucleotide synthase that catalyzes the synthesis of c-di-GMP, has no activity with other NTP substrates. The chain is c-di-GMP synthase from Flavobacteriaceae sp. genome_bin_11.